The primary structure comprises 114 residues: Large ribosomal subunit protein uL22 (114 aa).

The protein belongs to the universal ribosomal protein uL22 family. As to quaternary structure, part of the 50S ribosomal subunit.

Its function is as follows. This protein binds specifically to 23S rRNA; its binding is stimulated by other ribosomal proteins, e.g. L4, L17, and L20. It is important during the early stages of 50S assembly. It makes multiple contacts with different domains of the 23S rRNA in the assembled 50S subunit and ribosome. In terms of biological role, the globular domain of the protein is located near the polypeptide exit tunnel on the outside of the subunit, while an extended beta-hairpin is found that lines the wall of the exit tunnel in the center of the 70S ribosome. The protein is Large ribosomal subunit protein uL22 of Ehrlichia canis (strain Jake).